Reading from the N-terminus, the 238-residue chain is 2-C-methyl-D-erythritol 4-phosphate cytidylyltransferase (238 aa).

This sequence belongs to the IspD/TarI cytidylyltransferase family. IspD subfamily.

The catalysed reaction is 2-C-methyl-D-erythritol 4-phosphate + CTP + H(+) = 4-CDP-2-C-methyl-D-erythritol + diphosphate. Its pathway is isoprenoid biosynthesis; isopentenyl diphosphate biosynthesis via DXP pathway; isopentenyl diphosphate from 1-deoxy-D-xylulose 5-phosphate: step 2/6. Its function is as follows. Catalyzes the formation of 4-diphosphocytidyl-2-C-methyl-D-erythritol from CTP and 2-C-methyl-D-erythritol 4-phosphate (MEP). This is 2-C-methyl-D-erythritol 4-phosphate cytidylyltransferase from Paraburkholderia phytofirmans (strain DSM 17436 / LMG 22146 / PsJN) (Burkholderia phytofirmans).